The following is a 501-amino-acid chain: Glycerol kinase (501 aa).

Threonine 12 provides a ligand contact to ADP. 3 residues coordinate ATP: threonine 12, threonine 13, and serine 14. Threonine 12 contacts sn-glycerol 3-phosphate. Arginine 16 contributes to the ADP binding site. Positions 82, 83, 134, and 244 each coordinate sn-glycerol 3-phosphate. 5 residues coordinate glycerol: arginine 82, glutamate 83, tyrosine 134, aspartate 244, and glutamine 245. ADP contacts are provided by threonine 266 and glycine 310. The ATP site is built by threonine 266, glycine 310, glutamine 314, and glycine 411. 2 residues coordinate ADP: glycine 411 and asparagine 415.

This sequence belongs to the FGGY kinase family.

The catalysed reaction is glycerol + ATP = sn-glycerol 3-phosphate + ADP + H(+). It participates in polyol metabolism; glycerol degradation via glycerol kinase pathway; sn-glycerol 3-phosphate from glycerol: step 1/1. Inhibited by fructose 1,6-bisphosphate (FBP). Key enzyme in the regulation of glycerol uptake and metabolism. Catalyzes the phosphorylation of glycerol to yield sn-glycerol 3-phosphate. The sequence is that of Glycerol kinase from Methylorubrum populi (strain ATCC BAA-705 / NCIMB 13946 / BJ001) (Methylobacterium populi).